The chain runs to 418 residues: F420-non-reducing hydrogenase vhu subunit A (418 aa).

Residues C61 and C64 each coordinate Ni(2+).

The protein belongs to the [NiFe]/[NiFeSe] hydrogenase large subunit family. In terms of assembly, the F420-non-reducing hydrogenase vhu is composed of four subunits; VhuA, VhuD, VhuG and VhuU. Ni(2+) is required as a cofactor.

The chain is F420-non-reducing hydrogenase vhu subunit A (vhuA) from Methanocaldococcus jannaschii (strain ATCC 43067 / DSM 2661 / JAL-1 / JCM 10045 / NBRC 100440) (Methanococcus jannaschii).